A 540-amino-acid polypeptide reads, in one-letter code: Chaperonin GroEL (540 aa).

ATP is bound by residues 29 to 32 (TLGP), 86 to 90 (DGTTT), glycine 413, 476 to 478 (NAA), and aspartate 492.

It belongs to the chaperonin (HSP60) family. In terms of assembly, forms a cylinder of 14 subunits composed of two heptameric rings stacked back-to-back. Interacts with the co-chaperonin GroES.

It localises to the cytoplasm. It carries out the reaction ATP + H2O + a folded polypeptide = ADP + phosphate + an unfolded polypeptide.. In terms of biological role, together with its co-chaperonin GroES, plays an essential role in assisting protein folding. The GroEL-GroES system forms a nano-cage that allows encapsulation of the non-native substrate proteins and provides a physical environment optimized to promote and accelerate protein folding. In Streptococcus sanguinis, this protein is Chaperonin GroEL.